We begin with the raw amino-acid sequence, 400 residues long: Bifunctional enzyme IspD/IspF (400 aa).

A 2-C-methyl-D-erythritol 4-phosphate cytidylyltransferase region spans residues 1 to 240 (MQESTMKFGI…EKLSHALPDV (240 aa)). The tract at residues 241–400 (RTGNGYDVHQ…ATVVYQGRPL (160 aa)) is 2-C-methyl-D-erythritol 2,4-cyclodiphosphate synthase. Residues D247 and H249 each coordinate a divalent metal cation. Residues 247 to 249 (DVH) and 273 to 274 (HS) each bind 4-CDP-2-C-methyl-D-erythritol 2-phosphate. H281 contacts a divalent metal cation. 4-CDP-2-C-methyl-D-erythritol 2-phosphate contacts are provided by residues 295–297 (DIG), 371–374 (TTNE), F378, and R381.

This sequence in the N-terminal section; belongs to the IspD/TarI cytidylyltransferase family. IspD subfamily. In the C-terminal section; belongs to the IspF family. Requires a divalent metal cation as cofactor.

The catalysed reaction is 2-C-methyl-D-erythritol 4-phosphate + CTP + H(+) = 4-CDP-2-C-methyl-D-erythritol + diphosphate. The enzyme catalyses 4-CDP-2-C-methyl-D-erythritol 2-phosphate = 2-C-methyl-D-erythritol 2,4-cyclic diphosphate + CMP. Its pathway is isoprenoid biosynthesis; isopentenyl diphosphate biosynthesis via DXP pathway; isopentenyl diphosphate from 1-deoxy-D-xylulose 5-phosphate: step 2/6. It functions in the pathway isoprenoid biosynthesis; isopentenyl diphosphate biosynthesis via DXP pathway; isopentenyl diphosphate from 1-deoxy-D-xylulose 5-phosphate: step 4/6. Functionally, bifunctional enzyme that catalyzes the formation of 4-diphosphocytidyl-2-C-methyl-D-erythritol from CTP and 2-C-methyl-D-erythritol 4-phosphate (MEP) (IspD), and catalyzes the conversion of 4-diphosphocytidyl-2-C-methyl-D-erythritol 2-phosphate (CDP-ME2P) to 2-C-methyl-D-erythritol 2,4-cyclodiphosphate (ME-CPP) with a corresponding release of cytidine 5-monophosphate (CMP) (IspF). The chain is Bifunctional enzyme IspD/IspF from Agrobacterium fabrum (strain C58 / ATCC 33970) (Agrobacterium tumefaciens (strain C58)).